The chain runs to 606 residues: Alpha-1,2-mannosyltransferase MNN23 (606 aa).

At 1–14 (MSINFLSIPRNRFK) the chain is on the cytoplasmic side. Residues 15–35 (AIGVLSVTCILIYVILHSSII) traverse the membrane as a helical segment. Residues 36–606 (TTDFDVSDYG…QVAWLSKSQN (571 aa)) lie on the Extracellular side of the membrane. The interval 59–86 (DNGENLKDPQPELDNDKGNGETDTTTSN) is disordered. Residues 62–78 (ENLKDPQPELDNDKGNG) show a composition bias toward basic and acidic residues.

The protein belongs to the MNN1/MNT family.

The protein localises to the golgi apparatus membrane. The protein operates within protein modification; protein glycosylation. Functionally, alpha-1,2-mannosyltransferase required for cell wall integrity. Responsible for addition of the first alpha-1,2-linked mannose to form the branches on the mannan backbone of oligosaccharides. Addition of alpha-1,2-mannose is required for stabilization of the alpha-1,6-mannose backbone and hence regulates mannan fibril length; and is important for both immune recognition and virulence. The sequence is that of Alpha-1,2-mannosyltransferase MNN23 (MNN23) from Candida albicans (strain SC5314 / ATCC MYA-2876) (Yeast).